We begin with the raw amino-acid sequence, 344 residues long: Mitochondrial substrate carrier family protein D (344 aa).

Residues 1-22 (MDSTKTNNKWAAAGILNSVGKD) lie on the Mitochondrial intermembrane side of the membrane. Solcar repeat units follow at residues 17 to 104 (NSVG…CQSY), 119 to 212 (IPYH…MKRK), and 239 to 327 (VPAW…TRNL). A helical membrane pass occupies residues 23 to 43 (FVAGSVGGMSSIMAGHPFDTI). At 44-75 (KVMLQDASGNLPKFKNGFQALKYIMKVDGIKG) the chain is on the mitochondrial matrix side. A helical membrane pass occupies residues 76–96 (IYRGLSVPLFSVSFTNSVFFA). Over 97 to 116 (TNNFCQSYFHPPCKDENGED) the chain is Mitochondrial intermembrane. Residues 117-137 (ILIPYHKAAAAGAIAGGVISL) form a helical membrane-spanning segment. Over 138–186 (LITPRDLVKSKLQVQCRPFGSTNVSLQYKGPIDVIRQTIKRDGIKGMFK) the chain is Mitochondrial matrix. A helical membrane pass occupies residues 187–207 (GIRSTFCRDIPGDAVYFVVYE). Topologically, residues 208-238 (FMKRKLLALSKNNNNNNNNNDNNDNSSPKAG) are mitochondrial intermembrane. The chain crosses the membrane as a helical span at residues 239–259 (VPAWVAIGAGGCAGMSFWMSI). Residues 260–301 (YPMDVVKTRIQTQPDHLPPQYTSVLQTITKIYREEGISVFFR) lie on the Mitochondrial matrix side of the membrane. Residues 302–321 (GFSATILRAFPTSAVNFLMY) form a helical membrane-spanning segment. Over 322–344 (ETTRNLLNSKDPFYNNNDHYNAE) the chain is Mitochondrial intermembrane.

It belongs to the mitochondrial carrier (TC 2.A.29) family.

The protein localises to the mitochondrion inner membrane. Its function is as follows. Calcium-dependent mitochondrial solute carrier. Mitochondrial solute carriers shuttle metabolites, nucleotides, and cofactors through the mitochondrial inner membrane. This is Mitochondrial substrate carrier family protein D (mcfD) from Dictyostelium discoideum (Social amoeba).